The following is a 280-amino-acid chain: Large ribosomal subunit protein uL2 (280 aa).

Disordered stretches follow at residues S32–M54 and R221–K280. Residues N37–V49 show a composition bias toward polar residues. The span at M232 to G242 shows a compositional bias: gly residues. Positions K257–K280 are enriched in basic residues.

Belongs to the universal ribosomal protein uL2 family. As to quaternary structure, part of the 50S ribosomal subunit. Forms a bridge to the 30S subunit in the 70S ribosome.

In terms of biological role, one of the primary rRNA binding proteins. Required for association of the 30S and 50S subunits to form the 70S ribosome, for tRNA binding and peptide bond formation. It has been suggested to have peptidyltransferase activity; this is somewhat controversial. Makes several contacts with the 16S rRNA in the 70S ribosome. The protein is Large ribosomal subunit protein uL2 of Chloroherpeton thalassium (strain ATCC 35110 / GB-78).